A 380-amino-acid chain; its full sequence is Queuine tRNA-ribosyltransferase (380 aa).

Residue aspartate 93 is the Proton acceptor of the active site. Substrate is bound by residues 93–97, aspartate 147, glutamine 198, and glycine 225; that span reads DSGGF. Residues 256-262 form an RNA binding region; that stretch reads GVGLPSN. The Nucleophile role is filled by aspartate 275. Residues 280 to 284 form an RNA binding; important for wobble base 34 recognition region; it reads ARNGR. Zn(2+) contacts are provided by cysteine 313, cysteine 315, cysteine 318, and histidine 344.

Belongs to the queuine tRNA-ribosyltransferase family. Homodimer. Within each dimer, one monomer is responsible for RNA recognition and catalysis, while the other monomer binds to the replacement base PreQ1. The cofactor is Zn(2+).

The enzyme catalyses 7-aminomethyl-7-carbaguanine + guanosine(34) in tRNA = 7-aminomethyl-7-carbaguanosine(34) in tRNA + guanine. Its pathway is tRNA modification; tRNA-queuosine biosynthesis. Functionally, catalyzes the base-exchange of a guanine (G) residue with the queuine precursor 7-aminomethyl-7-deazaguanine (PreQ1) at position 34 (anticodon wobble position) in tRNAs with GU(N) anticodons (tRNA-Asp, -Asn, -His and -Tyr). Catalysis occurs through a double-displacement mechanism. The nucleophile active site attacks the C1' of nucleotide 34 to detach the guanine base from the RNA, forming a covalent enzyme-RNA intermediate. The proton acceptor active site deprotonates the incoming PreQ1, allowing a nucleophilic attack on the C1' of the ribose to form the product. After dissociation, two additional enzymatic reactions on the tRNA convert PreQ1 to queuine (Q), resulting in the hypermodified nucleoside queuosine (7-(((4,5-cis-dihydroxy-2-cyclopenten-1-yl)amino)methyl)-7-deazaguanosine). The polypeptide is Queuine tRNA-ribosyltransferase (Clostridium perfringens (strain 13 / Type A)).